A 359-amino-acid polypeptide reads, in one-letter code: MAP kinase-activated protein kinase 2 (359 aa).

Residues 20–281 (VTSNTVLGYG…IQDVISNKWI (262 aa)) enclose the Protein kinase domain. ATP contacts are provided by residues 26–34 (LGYGINGKV) and K49. D142 functions as the Proton acceptor in the catalytic mechanism.

The protein belongs to the protein kinase superfamily. CAMK Ser/Thr protein kinase family. Post-translationally, phosphorylated and activated by MAP kinase.

It catalyses the reaction L-seryl-[protein] + ATP = O-phospho-L-seryl-[protein] + ADP + H(+). It carries out the reaction L-threonyl-[protein] + ATP = O-phospho-L-threonyl-[protein] + ADP + H(+). Its physiological substrate seems to be the small heat shock protein (HSP27/HSP25). In Drosophila melanogaster (Fruit fly), this protein is MAP kinase-activated protein kinase 2 (MAPk-Ak2).